The following is a 339-amino-acid chain: Transcription initiation factor IIB (339 aa).

Residues E39 to Q70 form a TFIIB-type zinc finger. Residues C43, C46, C62, and C65 each contribute to the Zn(2+) site. Tandem repeats lie at residues S156–L239 and D250–E331.

This sequence belongs to the TFIIB family.

Functionally, stabilizes TBP binding to an archaeal box-A promoter. Also responsible for recruiting RNA polymerase II to the pre-initiation complex (DNA-TBP-TFIIB). The polypeptide is Transcription initiation factor IIB (Methanococcus maripaludis (strain C5 / ATCC BAA-1333)).